Here is a 167-residue protein sequence, read N- to C-terminus: Shikimate kinase (167 aa).

8 to 15 (GFMGSGKT) contacts ATP.

It belongs to the shikimate kinase family.

The protein localises to the cytoplasm. It carries out the reaction shikimate + ATP = 3-phosphoshikimate + ADP + H(+). Its pathway is metabolic intermediate biosynthesis; chorismate biosynthesis; chorismate from D-erythrose 4-phosphate and phosphoenolpyruvate: step 5/7. This chain is Shikimate kinase, found in Helicobacter hepaticus (strain ATCC 51449 / 3B1).